A 153-amino-acid chain; its full sequence is 3-hydroxyacyl-[acyl-carrier-protein] dehydratase FabZ (153 aa).

Histidine 54 is a catalytic residue.

The protein belongs to the thioester dehydratase family. FabZ subfamily.

The protein localises to the cytoplasm. It catalyses the reaction a (3R)-hydroxyacyl-[ACP] = a (2E)-enoyl-[ACP] + H2O. Functionally, involved in unsaturated fatty acids biosynthesis. Catalyzes the dehydration of short chain beta-hydroxyacyl-ACPs and long chain saturated and unsaturated beta-hydroxyacyl-ACPs. This chain is 3-hydroxyacyl-[acyl-carrier-protein] dehydratase FabZ, found in Shewanella denitrificans (strain OS217 / ATCC BAA-1090 / DSM 15013).